The chain runs to 381 residues: Outer membrane protein assembly factor BamB (381 aa).

An N-terminal signal peptide occupies residues 1–22 (MNLLKRYAAPVACAAAVLVFAA). The N-palmitoyl cysteine moiety is linked to residue Cys23. A lipid anchor (S-diacylglycerol cysteine) is attached at Cys23.

The protein belongs to the BamB family. In terms of assembly, part of the Bam complex.

The protein resides in the cell outer membrane. Its function is as follows. Part of the outer membrane protein assembly complex, which is involved in assembly and insertion of beta-barrel proteins into the outer membrane. The protein is Outer membrane protein assembly factor BamB of Burkholderia pseudomallei (strain K96243).